A 422-amino-acid chain; its full sequence is NADH-quinone oxidoreductase subunit F (422 aa).

The disordered stretch occupies residues 1 to 26 (MLKEEDKIFTNLHGQQSHDLKSSKKR). Basic and acidic residues predominate over residues 16 to 26 (QSHDLKSSKKR). 54–63 (GRGGAGFSTG) is a binding site for NAD(+). 166–213 (GAGAYICGEETALLESLEGKKGMPRLKPPFPAGFGLYGCPTTINNVES) lines the FMN pocket. The [4Fe-4S] cluster site is built by Cys-344, Cys-347, Cys-350, and Cys-390.

The protein belongs to the complex I 51 kDa subunit family. Requires FMN as cofactor. [4Fe-4S] cluster serves as cofactor.

The catalysed reaction is a quinone + NADH + 5 H(+)(in) = a quinol + NAD(+) + 4 H(+)(out). In terms of biological role, NDH-1 shuttles electrons from NADH, via FMN and iron-sulfur (Fe-S) centers, to quinones in the respiratory chain. Couples the redox reaction to proton translocation (for every two electrons transferred, four hydrogen ions are translocated across the cytoplasmic membrane), and thus conserves the redox energy in a proton gradient. This chain is NADH-quinone oxidoreductase subunit F (nuoF), found in Rickettsia felis (strain ATCC VR-1525 / URRWXCal2) (Rickettsia azadi).